A 384-amino-acid polypeptide reads, in one-letter code: Succinyl-diaminopimelate desuccinylase (384 aa).

Histidine 71 serves as a coordination point for Zn(2+). Residue aspartate 73 is part of the active site. Residue aspartate 104 coordinates Zn(2+). The Proton acceptor role is filled by glutamate 138. Zn(2+) is bound by residues glutamate 139, glutamate 167, and histidine 353.

This sequence belongs to the peptidase M20A family. DapE subfamily. As to quaternary structure, homodimer. It depends on Zn(2+) as a cofactor. Co(2+) is required as a cofactor.

It carries out the reaction N-succinyl-(2S,6S)-2,6-diaminopimelate + H2O = (2S,6S)-2,6-diaminopimelate + succinate. The protein operates within amino-acid biosynthesis; L-lysine biosynthesis via DAP pathway; LL-2,6-diaminopimelate from (S)-tetrahydrodipicolinate (succinylase route): step 3/3. Its function is as follows. Catalyzes the hydrolysis of N-succinyl-L,L-diaminopimelic acid (SDAP), forming succinate and LL-2,6-diaminopimelate (DAP), an intermediate involved in the bacterial biosynthesis of lysine and meso-diaminopimelic acid, an essential component of bacterial cell walls. This Aromatoleum aromaticum (strain DSM 19018 / LMG 30748 / EbN1) (Azoarcus sp. (strain EbN1)) protein is Succinyl-diaminopimelate desuccinylase.